An 87-amino-acid polypeptide reads, in one-letter code: Alpha-toxin To2 (87 aa).

Residues 1 to 20 form the signal peptide; that stretch reads MIRFVLFISCFFLIGTVVEC. Positions 22 to 84 constitute an LCN-type CS-alpha/beta domain; that stretch reads KDGYLMEGDG…IWDSKNNKCG (63 aa). Disulfide bonds link cysteine 32/cysteine 83, cysteine 36/cysteine 58, cysteine 44/cysteine 64, and cysteine 48/cysteine 66. Lysine 85 bears the Lysine amide mark.

In terms of tissue distribution, expressed by the venom gland.

The protein localises to the secreted. Functionally, alpha toxins bind voltage-independently at site-3 of sodium channels (Nav) and inhibit the inactivation of the activated channels, thereby blocking neuronal transmission. Affects the tetrodotoxin-sensitive sodium current permeability of F-11 rat neuroblastoma cells. Produces a dose dependent increase in amplitude and duration of the current. This is Alpha-toxin To2 from Tityus obscurus (Amazonian scorpion).